A 137-amino-acid chain; its full sequence is Global transcriptional regulator Spx (137 aa).

Cys-10 and Cys-13 are disulfide-bonded.

Belongs to the ArsC family. Spx subfamily. Interacts with the C-terminal domain of the alpha subunit of the RNAP.

The protein resides in the cytoplasm. Its function is as follows. Global transcriptional regulator that plays a key role in stress response and exerts either positive or negative regulation of genes. Acts by interacting with the C-terminal domain of the alpha subunit of the RNA polymerase (RNAP). This interaction can enhance binding of RNAP to the promoter region of target genes and stimulate their transcription, or block interaction of RNAP with activator. This chain is Global transcriptional regulator Spx, found in Streptococcus agalactiae serotype III (strain NEM316).